The chain runs to 452 residues: Mitochondrial import inner membrane translocase subunit TIM50 (452 aa).

A mitochondrion-targeting transit peptide spans 1–23 (MSLSKLTQTCFSRHQAKTFIRLY). The Mitochondrial matrix segment spans residues 24-167 (SSDFKSLLGP…RRKRMERNTR (144 aa)). Disordered stretches follow at residues 96–115 (IEAE…TSSA) and 130–153 (ESAA…GNAE). Residues 131–144 (SAASKSSSSSGGSS) show a composition bias toward low complexity. A helical transmembrane segment spans residues 168 to 188 (IGAYVLFGGSIIGFISFCFYY). The Mitochondrial intermembrane portion of the chain corresponds to 189-452 (GRAQRDEFGN…LFGSRRHVNA (264 aa)). Positions 243–387 (YLQPKYTIVI…VDLAELLKTI (145 aa)) constitute an FCP1 homology domain.

It belongs to the TIM50 family.

The protein localises to the mitochondrion inner membrane. Essential component of the TIM23 complex, a complex that mediates the translocation of transit peptide-containing proteins across the mitochondrial inner membrane. This chain is Mitochondrial import inner membrane translocase subunit TIM50 (scpl-4), found in Caenorhabditis elegans.